Consider the following 636-residue polypeptide: MKLSPPKKNLPPQKNNEPPFPYLRLLVQVGIALFLVWIWQESLHKATVSTIPYSEFLNKINQKEIIECKITPDEIYGKMLVSKPEEKGQPPKIALFSTVRVDDPDLVKRLQSAGVVYGSVKPSLLSQILFSWVVPILIFFLVWFALARFMGGGGAGYSLLNIGKSRARLLVDESTGVTFADVAGCDEAKYELQEVVDFLKNPSRYRALGAKIPKGVLLVGPPGTGKTLLAKAVAGEAKVPFFSISGSEFVEMFVGVGAARVRDLFGQAKSKAPCIVFIDELDAIGRQRGVRIQVGSDEHEQTLNQLLVEMDGFDPNEGIIVLAATNRPEILDRALLRPGRFDRQVVVDLPDANGREAILRVHARGKPLSENIDFKEIAQATMGFSGADLANLLNEAALLAARRKSSRIEQVDLLEAMEKVIAGPERKSRVLSEKERERVAYHEVGHALVAFYSEHAEPVRKISIVPRGKSALGYTLQLPTAQKYLLSKSELLDRICVAMGGRAAEELIYGDITTGAENDLEVATTIARQMVCLYGMGEKSGLAHYVPPQPLLGGLDTSYLKECSDETARIIDLEIEKILEENYQRALSILRHHHVELKEVTKYLLQKETLNAEEFKSILENLKEQRKEAPSYSSTL.

The Cytoplasmic segment spans residues M1–P18. A helical membrane pass occupies residues P19–W39. The Periplasmic portion of the chain corresponds to Q40–S126. The chain crosses the membrane as a helical span at residues Q127–A147. The Cytoplasmic segment spans residues R148–L636. G220–T227 serves as a coordination point for ATP. A Zn(2+)-binding site is contributed by H442. E443 is a catalytic residue. H446 and D519 together coordinate Zn(2+).

The protein in the central section; belongs to the AAA ATPase family. In the C-terminal section; belongs to the peptidase M41 family. Homohexamer. Zn(2+) serves as cofactor.

Its subcellular location is the cell inner membrane. Functionally, acts as a processive, ATP-dependent zinc metallopeptidase for both cytoplasmic and membrane proteins. Plays a role in the quality control of integral membrane proteins. The polypeptide is ATP-dependent zinc metalloprotease FtsH 1 (Methylacidiphilum infernorum (isolate V4) (Methylokorus infernorum (strain V4))).